Consider the following 138-residue polypeptide: Homeobox protein HD-11 (138 aa).

Residues 30 to 89 (CTGKQMRKTRLQTCVLNRIFEISRFPSSKTIVDLALLINVHPKSIQKWFQNTRQAIRKKG) constitute a DNA-binding region (homeobox).

The protein resides in the nucleus. The chain is Homeobox protein HD-11 (HD-11) from Encephalitozoon cuniculi (strain GB-M1) (Microsporidian parasite).